The primary structure comprises 197 residues: uncharacterized protein (197 aa).

The next 6 membrane-spanning stretches (helical) occupy residues 5–23 (LNLLIFFIAALLIALGLRF), 27–46 (ISFAGLILLLAVVPALMLRF), 55–77 (VIAGIFVLGLALNALIGVALAYT), 87–109 (LSLLPLTLVLTANVFATSLVIRI), 116–138 (VFAFYFWFLISVGLAFLFLLPTG), and 153–174 (FVEFPILYSELALIPSAFCLVF).

The protein resides in the cell membrane. This is an uncharacterized protein from Archaeoglobus fulgidus (strain ATCC 49558 / DSM 4304 / JCM 9628 / NBRC 100126 / VC-16).